A 719-amino-acid polypeptide reads, in one-letter code: Putative ankyrin repeat protein RBE_0319 (719 aa).

ANK repeat units lie at residues 377-406, 408-438, 442-472, 476-506, 510-540, 544-572, 576-605, 609-639, and 642-672; these read VAEELLFTATYYQNINIIKQIIETKIEISS, TLIKALYINFTSDNKEILDYLLSFKGLNINE, NGGTLLDYAITFNKLDIVKKLLSHENIEVNK, YGFTILEQAINDDKLEIVKLLLSCKSLEINQ, YQTTPLQQAINGDKLEIVKLLLSHPDIKFNE, LGYTSLDWVIICNKLEIFKVLMPHLDINQ, DGYTPLEWSIYNSYEVFQTLLLRPDINVNE, HGLTPLQLAIIDHNDQMIQALLSHKNIEVSE, and QYGTPLELVINNSNDTALKLLLSHPKINLNK.

The chain is Putative ankyrin repeat protein RBE_0319 from Rickettsia bellii (strain RML369-C).